A 452-amino-acid polypeptide reads, in one-letter code: Phosphoglucosamine mutase (452 aa).

The active-site Phosphoserine intermediate is Ser-112. Ser-112, Asp-251, Asp-253, and Asp-255 together coordinate Mg(2+). Position 112 is a phosphoserine (Ser-112).

Belongs to the phosphohexose mutase family. Requires Mg(2+) as cofactor. Activated by phosphorylation.

It catalyses the reaction alpha-D-glucosamine 1-phosphate = D-glucosamine 6-phosphate. In terms of biological role, catalyzes the conversion of glucosamine-6-phosphate to glucosamine-1-phosphate. This is Phosphoglucosamine mutase from Bordetella pertussis (strain Tohama I / ATCC BAA-589 / NCTC 13251).